The following is a 478-amino-acid chain: Ankyrin repeat and BTB/POZ domain-containing protein 1 (478 aa).

2 ANK repeats span residues 1–31 and 35–64; these read MDTSDLFASCRKGDVGRVRYLLEQRDVEVNV and WDSTPLYYACLCGHEELVRYLLANGARCEA. 2 consecutive BTB domains span residues 115 to 182 and 272 to 346; these read SDVV…DIGV and PDIC…ELPP. Residues 450 to 478 adopt a coiled-coil conformation; sequence TVQTYSAIEEAQQQLRALENLLVSIGLDC.

The protein resides in the cytoplasm. Functionally, may act as a mediator of the PTEN growth-suppressive signaling pathway. May play a role in developmental processes. The chain is Ankyrin repeat and BTB/POZ domain-containing protein 1 from Rattus norvegicus (Rat).